A 387-amino-acid chain; its full sequence is 1-deoxy-D-xylulose 5-phosphate reductoisomerase (387 aa).

The NADPH site is built by T11, G12, S13, I14, G37, R38, N39, and N125. 1-deoxy-D-xylulose 5-phosphate is bound at residue K126. E127 serves as a coordination point for NADPH. D151 lines the Mn(2+) pocket. 1-deoxy-D-xylulose 5-phosphate is bound by residues S152, E153, S177, and H200. E153 is a Mn(2+) binding site. NADPH is bound at residue G206. Residues S213, N218, K219, and E222 each coordinate 1-deoxy-D-xylulose 5-phosphate. Residue E222 participates in Mn(2+) binding.

It belongs to the DXR family. The cofactor is Mg(2+). It depends on Mn(2+) as a cofactor.

It catalyses the reaction 2-C-methyl-D-erythritol 4-phosphate + NADP(+) = 1-deoxy-D-xylulose 5-phosphate + NADPH + H(+). The protein operates within isoprenoid biosynthesis; isopentenyl diphosphate biosynthesis via DXP pathway; isopentenyl diphosphate from 1-deoxy-D-xylulose 5-phosphate: step 1/6. Catalyzes the NADPH-dependent rearrangement and reduction of 1-deoxy-D-xylulose-5-phosphate (DXP) to 2-C-methyl-D-erythritol 4-phosphate (MEP). The protein is 1-deoxy-D-xylulose 5-phosphate reductoisomerase of Desulforamulus reducens (strain ATCC BAA-1160 / DSM 100696 / MI-1) (Desulfotomaculum reducens).